The sequence spans 298 residues: N-acetylmuramic acid 6-phosphate etherase (298 aa).

Residues Ile-55 to Lys-218 enclose the SIS domain. Glu-83 functions as the Proton donor in the catalytic mechanism. Residue Glu-114 is part of the active site.

This sequence belongs to the GCKR-like family. MurNAc-6-P etherase subfamily. As to quaternary structure, homodimer.

The enzyme catalyses N-acetyl-D-muramate 6-phosphate + H2O = N-acetyl-D-glucosamine 6-phosphate + (R)-lactate. Its pathway is amino-sugar metabolism; 1,6-anhydro-N-acetylmuramate degradation. The protein operates within amino-sugar metabolism; N-acetylmuramate degradation. It participates in cell wall biogenesis; peptidoglycan recycling. Specifically catalyzes the cleavage of the D-lactyl ether substituent of MurNAc 6-phosphate, producing GlcNAc 6-phosphate and D-lactate. Together with AnmK, is also required for the utilization of anhydro-N-acetylmuramic acid (anhMurNAc) either imported from the medium or derived from its own cell wall murein, and thus plays a role in cell wall recycling. This is N-acetylmuramic acid 6-phosphate etherase from Escherichia coli O7:K1 (strain IAI39 / ExPEC).